We begin with the raw amino-acid sequence, 275 residues long: Phosphate import ATP-binding protein PstB 1 (275 aa).

Residues 22–261 (IETRDLSVYY…DRTEKIFNSP (240 aa)) form the ABC transporter domain. 54–61 (GPSGCGKS) serves as a coordination point for ATP.

The protein belongs to the ABC transporter superfamily. Phosphate importer (TC 3.A.1.7) family. In terms of assembly, the complex is composed of two ATP-binding proteins (PstB), two transmembrane proteins (PstC and PstA) and a solute-binding protein (PstS).

The protein localises to the cell inner membrane. It catalyses the reaction phosphate(out) + ATP + H2O = ADP + 2 phosphate(in) + H(+). In terms of biological role, part of the ABC transporter complex PstSACB involved in phosphate import. Responsible for energy coupling to the transport system. This is Phosphate import ATP-binding protein PstB 1 from Synechococcus sp. (strain JA-3-3Ab) (Cyanobacteria bacterium Yellowstone A-Prime).